Here is a 162-residue protein sequence, read N- to C-terminus: Caveolin-2 (162 aa).

Residues 1–86 (MGLETEKADV…FEMSKYVIYK (86 aa)) lie on the Cytoplasmic side of the membrane. Tyr19 carries the phosphotyrosine; by SRC modification. Phosphoserine is present on residues Ser20 and Ser23. A Phosphotyrosine; by SRC modification is found at Tyr27. An intramembrane region (helical) is located at residues 87–107 (FLTVFLAIPLAFAAGILFATL). Topologically, residues 108–162 (SCLHIWIIMPFVKTCLMVLPSVQTIWKSVTDVVIAPLCTSIGRSFSSVSLQLSHD) are cytoplasmic.

The protein belongs to the caveolin family. As to quaternary structure, monomer or homodimer. Interacts with CAV1; the interaction forms a stable heterooligomeric complex that is required for targeting to lipid rafts and for caveolae formation. Tyrosine phosphorylated forms do not form heterooligomers with the Tyr-19-phosphorylated form existing as a monomer or dimer, and the Tyr-27-form as a monomer only. Interacts (tyrosine phosphorylated form) with the SH2 domain-containing proteins, RASA1, NCK1 and SRC. Interacts (tyrosine phosphorylated form) with INSR, the interaction (Tyr-27-phosphorylated form) is increased on insulin stimulation. Interacts (Tyr-19 phosphorylated form) with MAPK1 (phosphorylated form); the interaction, promoted by insulin, leads to nuclear location and MAPK1 activation. Interacts with STAT3; the interaction is increased on insulin-induced tyrosine phosphorylation leading to STAT activation. In terms of processing, phosphorylated on serine and tyrosine residues. CAV1 promotes phosphorylation on Ser-23 which then targets the complex to the plasma membrane, lipid rafts and caveolae. Phosphorylation on both Tyr-19 and Tyr-27 is required for insulin-induced 'Ser-727' phosphorylation of STAT3 and its activation. Phosphorylation on Tyr-19 is required for insulin-induced phosphorylation of MAPK1 and DNA binding of STAT3. Tyrosine phosphorylation is induced by both EGF and insulin. In terms of tissue distribution, expressed in aortic endothelial cells.

It is found in the nucleus. It localises to the cytoplasm. Its subcellular location is the golgi apparatus membrane. The protein localises to the cell membrane. The protein resides in the membrane. It is found in the caveola. Functionally, may act as a scaffolding protein within caveolar membranes. Interacts directly with G-protein alpha subunits and can functionally regulate their activity. Acts as an accessory protein in conjunction with CAV1 in targeting to lipid rafts and driving caveolae formation. Positive regulator of cellular mitogenesis of the MAPK signaling pathway. Required for the insulin-stimulated nuclear translocation and activation of MAPK1 and STAT3, and the subsequent regulation of cell cycle progression. In Bos taurus (Bovine), this protein is Caveolin-2 (CAV2).